The sequence spans 149 residues: Putative prefoldin subunit alpha (149 aa).

The protein belongs to the prefoldin subunit alpha family.

It localises to the cytoplasm. Molecular chaperone capable of stabilizing a range of proteins. The sequence is that of Putative prefoldin subunit alpha from Aquifex aeolicus (strain VF5).